A 684-amino-acid chain; its full sequence is Pseudohemocyanin-1 (684 aa).

An N-terminal signal peptide occupies residues 1-23 (SLVVAAAAASPYSGSHDFSGFQR). The interval 7–32 (AAASPYSGSHDFSGFQRDEPDGVPTA) is disordered. N-linked (GlcNAc...) asparagine glycans are attached at residues Asn-100, Asn-193, Asn-230, and Asn-626.

Belongs to the tyrosinase family. Hemocyanin subfamily. As to quaternary structure, hexamer. In terms of tissue distribution, strongly expressed in ovaries. Also expressed in heart. Not detected in hepatopancreas, gills, connective tissue or muscle.

Functionally, does not function as a hemocyanin. This chain is Pseudohemocyanin-1, found in Homarus americanus (American lobster).